The following is a 583-amino-acid chain: J protein JJJ2 (583 aa).

Residues 11-79 (RTTYYSILGL…KLRYDRDLKI (69 aa)) form the J domain. The segment covering 215–224 (SYSEDPNSCL) has biased composition (polar residues). Positions 215–313 (SYSEDPNSCL…SGSHDSNLQS (99 aa)) are disordered. Ser-229 carries the phosphoserine modification. A compositionally biased stretch (low complexity) spans 240 to 252 (QQQQQQQQQQQQQ). Positions 262–281 (SPDEEKKNNKEPKRESRVSP) are enriched in basic and acidic residues. Residues 298 to 313 (KTSTFSSGSHDSNLQS) are compositionally biased toward polar residues.

The protein localises to the cytoplasm. The protein resides in the nucleus. The protein is J protein JJJ2 (JJJ2) of Saccharomyces cerevisiae (strain ATCC 204508 / S288c) (Baker's yeast).